The following is a 273-amino-acid chain: Pantothenate synthetase (273 aa).

27-34 (MGALHDGH) serves as a coordination point for ATP. His34 (proton donor) is an active-site residue. Residue Gln58 participates in (R)-pantoate binding. Beta-alanine is bound at residue Gln58. 144–147 (GKKD) provides a ligand contact to ATP. Gln150 lines the (R)-pantoate pocket. ATP is bound by residues Val173 and 181 to 184 (LSSR).

The protein belongs to the pantothenate synthetase family. As to quaternary structure, homodimer.

It is found in the cytoplasm. The enzyme catalyses (R)-pantoate + beta-alanine + ATP = (R)-pantothenate + AMP + diphosphate + H(+). It functions in the pathway cofactor biosynthesis; (R)-pantothenate biosynthesis; (R)-pantothenate from (R)-pantoate and beta-alanine: step 1/1. In terms of biological role, catalyzes the condensation of pantoate with beta-alanine in an ATP-dependent reaction via a pantoyl-adenylate intermediate. The protein is Pantothenate synthetase of Campylobacter curvus (strain 525.92).